The sequence spans 132 residues: Small ribosomal subunit protein uS8 (132 aa).

This sequence belongs to the universal ribosomal protein uS8 family. In terms of assembly, part of the 30S ribosomal subunit. Contacts proteins S5 and S12.

Its function is as follows. One of the primary rRNA binding proteins, it binds directly to 16S rRNA central domain where it helps coordinate assembly of the platform of the 30S subunit. In Clavibacter michiganensis subsp. michiganensis (strain NCPPB 382), this protein is Small ribosomal subunit protein uS8.